Reading from the N-terminus, the 83-residue chain is Short neurotoxin NCA-02/NCA-05/UER-05 (83 aa).

Positions 1-21 (MKTLLLTLVVVTMVCLDLGYT) are cleaved as a signal peptide. 4 disulfide bridges follow: C24–C45, C38–C62, C64–C75, and C76–C81.

This sequence belongs to the three-finger toxin family. Short-chain subfamily. Type I alpha-neurotoxin sub-subfamily. Expressed by the venom gland.

Its subcellular location is the secreted. Its function is as follows. Binds to muscle nicotinic acetylcholine receptor (nAChR) and inhibit acetylcholine from binding to the receptor, thereby impairing neuromuscular transmission. This chain is Short neurotoxin NCA-02/NCA-05/UER-05, found in Laticauda colubrina (Yellow-lipped sea krait).